We begin with the raw amino-acid sequence, 102 residues long: Putative ubiquitin-like protein FUBI-like protein ENSP00000310146 (102 aa).

The region spanning 23 to 99 (LCPQVAYVRA…LEVVGRRLGV (77 aa)) is the Ubiquitin-like domain.

The protein is Putative ubiquitin-like protein FUBI-like protein ENSP00000310146 of Homo sapiens (Human).